A 459-amino-acid chain; its full sequence is Tubulin gamma chain (459 aa).

142–148 is a GTP binding site; that stretch reads AGGTGSG. A disordered region spans residues 440 to 459; that stretch reads ADYLTKETAPTDEAEDKRAG.

It belongs to the tubulin family.

It localises to the cytoplasm. Its subcellular location is the cytoskeleton. The protein localises to the microtubule organizing center. The protein resides in the spindle pole body. Its function is as follows. Tubulin is the major constituent of microtubules. The gamma chain is found at microtubule organizing centers (MTOC) such as the spindle poles or the centrosome, suggesting that it is involved in the minus-end nucleation of microtubule assembly. This chain is Tubulin gamma chain (TUB4), found in Cochliobolus heterostrophus (strain C5 / ATCC 48332 / race O) (Southern corn leaf blight fungus).